A 295-amino-acid chain; its full sequence is uncharacterized protein (295 aa).

Belongs to the NAD(P)-dependent epimerase/dehydratase family.

This is an uncharacterized protein from Schizosaccharomyces pombe (strain 972 / ATCC 24843) (Fission yeast).